The primary structure comprises 144 residues: Large ribosomal subunit protein uL11 (144 aa).

This sequence belongs to the universal ribosomal protein uL11 family. In terms of assembly, part of the ribosomal stalk of the 50S ribosomal subunit. Interacts with L10 and the large rRNA to form the base of the stalk. L10 forms an elongated spine to which L12 dimers bind in a sequential fashion forming a multimeric L10(L12)X complex. Post-translationally, one or more lysine residues are methylated.

Forms part of the ribosomal stalk which helps the ribosome interact with GTP-bound translation factors. The chain is Large ribosomal subunit protein uL11 from Neisseria meningitidis serogroup B (strain ATCC BAA-335 / MC58).